A 171-amino-acid polypeptide reads, in one-letter code: uncharacterized protein (171 aa).

The 169-residue stretch at 3–171 (KKVAIILANE…FNREIVKQLQ (169 aa)) folds into the PfpI endopeptidase domain.

It belongs to the peptidase C56 family.

This is an uncharacterized protein from Staphylococcus aureus (strain COL).